Consider the following 678-residue polypeptide: Protein distal antenna (678 aa).

Residues 7-58 enclose the HTH psq-type domain; that stretch reads TKGKRPLRSLTPRDKIHAIQRIHDGESKASVARDIGVPESTLRGWCKNEDKL. Positions 34-54 form a DNA-binding region, H-T-H motif; it reads KASVARDIGVPESTLRGWCKN. 5 disordered regions span residues 232–310, 344–381, 445–528, 541–592, and 645–678; these read GAGN…GGPM, GVTS…PSGS, KETE…TSEC, GMEA…DEEE, and NETP…RRRK. Composition is skewed to polar residues over residues 241 to 254 and 349 to 363; these read PSGQ…SPRS and PIRS…QLAQ. Serine 251 and serine 254 each carry phosphoserine. Residues 372–381 show a composition bias toward low complexity; it reads LTPSSTPSGS. Polar residues predominate over residues 449–461; sequence TPSVRSLSSNEQN. Acidic residues predominate over residues 462–478; it reads PEADEATETDLDGEVEP. Over residues 495 to 508 the composition is skewed to polar residues; it reads TPSQSPIAHSSGSR. A compositionally biased stretch (low complexity) spans 570 to 586; the sequence is NNNDVSASNNNNNNNSN. The segment covering 657–667 has biased composition (acidic residues); sequence EDSEEHAAEEE.

Homomers. Interacts with itself, danr, ey and dac to form a complex (or complexes) containing the RD factors. Coexpressed with danr in the presumptive distal antenna, but not in the leg imaginal disk. Both proteins are also expressed in the brain and the eye region of the eye-antenna disk. First detected in early L3 eye disks in cells surrounding the newly initiated MF. Levels are uniform and high anterior to the furrow, lower levels within and posterior to the furrow. Limited expression is seen in small groups of cells in leg and wing. These appear in the location of prominent sense organ progenitors at relatively late stages of disk development.

Its subcellular location is the nucleus. Its function is as follows. Probable transcription factor with a role in the retinal determination (RD) network. Regulates ato expression and is required for normal R8 induction and differentiation. Danr appears to repress Dan expression, but Dan is required for Danr expression anterior to the morphogenetic furrow (MF). Dan and Danr lie downstream of so and require dac function for highest levels of expression. Contributes to differentiation of antenna-specific characteristics; effector gene that acts downstream of homothorax (hth), Distal-less (Dll), cut (ct) and spineless (ss) genes to control differentiation of distal antennal structures. The polypeptide is Protein distal antenna (Drosophila melanogaster (Fruit fly)).